The following is a 245-amino-acid chain: Small ribosomal subunit protein uS2 (245 aa).

This sequence belongs to the universal ribosomal protein uS2 family.

The polypeptide is Small ribosomal subunit protein uS2 (Pseudomonas entomophila (strain L48)).